We begin with the raw amino-acid sequence, 447 residues long: Methionine aminopeptidase 2-2 (447 aa).

The tract at residues 1 to 89 is disordered; it reads MAAQTAPELA…PRIPLTTLFP (89 aa). Over residues 15–30 the composition is skewed to polar residues; that stretch reads NKNSGSAEANVVSNGG. Positions 34–47 are enriched in acidic residues; that stretch reads DDAENEGDSDDDKD. Over residues 59–73 the composition is skewed to basic residues; the sequence is KKKKKKRSKKKKKAA. His-197 is a substrate binding site. Positions 217, 228, and 297 each coordinate a divalent metal cation. Residue His-305 coordinates substrate. A divalent metal cation contacts are provided by Glu-333 and Glu-428.

Belongs to the peptidase M24A family. Methionine aminopeptidase eukaryotic type 2 subfamily. Co(2+) is required as a cofactor. The cofactor is Zn(2+). Mn(2+) serves as cofactor. Requires Fe(2+) as cofactor.

The protein resides in the cytoplasm. It carries out the reaction Release of N-terminal amino acids, preferentially methionine, from peptides and arylamides.. Cotranslationally removes the N-terminal methionine from nascent proteins. The N-terminal methionine is often cleaved when the second residue in the primary sequence is small and uncharged (Met-Ala-, Cys, Gly, Pro, Ser, Thr, or Val). The chain is Methionine aminopeptidase 2-2 from Arthroderma otae (strain ATCC MYA-4605 / CBS 113480) (Microsporum canis).